Here is a 520-residue protein sequence, read N- to C-terminus: GMP synthase [glutamine-hydrolyzing] (520 aa).

In terms of domain architecture, Glutamine amidotransferase type-1 spans 12-205 (KIIVLDYGSQ…AVNICGARGD (194 aa)). The Nucleophile role is filled by cysteine 89. Active-site residues include histidine 179 and glutamate 181. The region spanning 206 to 395 (WSMDNFIDME…LGMPDEVVWR (190 aa)) is the GMPS ATP-PPase domain. 233-239 (SGGVDSS) contributes to the ATP binding site.

Homodimer.

The catalysed reaction is XMP + L-glutamine + ATP + H2O = GMP + L-glutamate + AMP + diphosphate + 2 H(+). It participates in purine metabolism; GMP biosynthesis; GMP from XMP (L-Gln route): step 1/1. Its function is as follows. Catalyzes the synthesis of GMP from XMP. This is GMP synthase [glutamine-hydrolyzing] from Streptococcus agalactiae serotype III (strain NEM316).